The sequence spans 562 residues: Probable sesquiterpene synthase (562 aa).

Mg(2+) is bound by residues Asp315, Asp319, and Glu467. The DDXXD motif signature appears at 315–319 (DDIYD).

It belongs to the terpene synthase family. Tpsa subfamily. Mg(2+) is required as a cofactor. It depends on Mn(2+) as a cofactor.

Sesquiterpene synthase. The sequence is that of Probable sesquiterpene synthase (SesquiTPS) from Santalum spicatum (Australian sandalwood).